Reading from the N-terminus, the 206-residue chain is Glycerol-3-phosphate acyltransferase (206 aa).

A run of 5 helical transmembrane segments spans residues 3 to 23 (LSLI…VIIG), 47 to 67 (VLGP…GTLA), 79 to 99 (HSLV…SIFL), 119 to 139 (PLFF…TSMV), and 152 to 172 (ILSF…VLIF).

This sequence belongs to the PlsY family. In terms of assembly, probably interacts with PlsX.

The protein resides in the cell membrane. The enzyme catalyses an acyl phosphate + sn-glycerol 3-phosphate = a 1-acyl-sn-glycero-3-phosphate + phosphate. The protein operates within lipid metabolism; phospholipid metabolism. Its function is as follows. Catalyzes the transfer of an acyl group from acyl-phosphate (acyl-PO(4)) to glycerol-3-phosphate (G3P) to form lysophosphatidic acid (LPA). This enzyme utilizes acyl-phosphate as fatty acyl donor, but not acyl-CoA or acyl-ACP. This is Glycerol-3-phosphate acyltransferase from Latilactobacillus sakei subsp. sakei (strain 23K) (Lactobacillus sakei subsp. sakei).